Consider the following 257-residue polypeptide: 3-deoxy-manno-octulosonate cytidylyltransferase (257 aa).

This sequence belongs to the KdsB family.

The protein resides in the cytoplasm. The catalysed reaction is 3-deoxy-alpha-D-manno-oct-2-ulosonate + CTP = CMP-3-deoxy-beta-D-manno-octulosonate + diphosphate. Its pathway is nucleotide-sugar biosynthesis; CMP-3-deoxy-D-manno-octulosonate biosynthesis; CMP-3-deoxy-D-manno-octulosonate from 3-deoxy-D-manno-octulosonate and CTP: step 1/1. The protein operates within bacterial outer membrane biogenesis; lipopolysaccharide biosynthesis. Its function is as follows. Activates KDO (a required 8-carbon sugar) for incorporation into bacterial lipopolysaccharide in Gram-negative bacteria. This is 3-deoxy-manno-octulosonate cytidylyltransferase from Methylobacillus flagellatus (strain ATCC 51484 / DSM 6875 / VKM B-1610 / KT).